Here is a 211-residue protein sequence, read N- to C-terminus: Dihydrofolate reductase (211 aa).

Residues 7–210 enclose the DHFR domain; sequence PIVGIVACLQ…YCFEFTLYNR (204 aa). NADP(+) is bound by residues A13 and 20 to 26; that span reads GIGFRGG. 34 to 39 contributes to the substrate binding site; the sequence is EMKYFR. Residue 58–60 participates in NADP(+) binding; the sequence is RKT. Position 74 (R74) interacts with substrate. NADP(+) contacts are provided by residues 80–82 and 123–130; these read SRS and GGGEVYSQ.

This sequence belongs to the dihydrofolate reductase family.

It catalyses the reaction (6S)-5,6,7,8-tetrahydrofolate + NADP(+) = 7,8-dihydrofolate + NADPH + H(+). It participates in cofactor biosynthesis; tetrahydrofolate biosynthesis; 5,6,7,8-tetrahydrofolate from 7,8-dihydrofolate: step 1/1. Key enzyme in folate metabolism. Catalyzes an essential reaction for de novo glycine and purine synthesis, and for DNA precursor synthesis. The polypeptide is Dihydrofolate reductase (DFR1) (Saccharomyces cerevisiae (strain ATCC 204508 / S288c) (Baker's yeast)).